Here is a 557-residue protein sequence, read N- to C-terminus: Jerky protein (557 aa).

The HTH psq-type domain maps to Lys11–Leu62. 2 consecutive DNA-binding regions (H-T-H motif) follow at residues Arg38–His58 and Pro110–Arg142. The region spanning Gln77–Asp149 is the HTH CENPB-type domain. The region spanning Lys213 to Trp382 is the DDE-1 domain.

The protein belongs to the tigger transposable element derived protein family. In terms of tissue distribution, brain; highest in the temporal and brainstem regions.

Its subcellular location is the nucleus. Functionally, may bind DNA. This Mus musculus (Mouse) protein is Jerky protein.